The following is a 374-amino-acid chain: Calcium/calmodulin-dependent protein kinase type 1 (374 aa).

The 257-residue stretch at 20 to 276 (YDFRDVLGTG…CEQALQHPWI (257 aa)) folds into the Protein kinase domain. ATP is bound by residues 26 to 34 (LGTGAFSEV) and lysine 49. A Glycyl lysine isopeptide (Lys-Gly) (interchain with G-Cter in ubiquitin) cross-link involves residue lysine 59. Aspartate 141 (proton acceptor) is an active-site residue. Position 177 is a phosphothreonine; by CaMKK1 and CaMKK2 (threonine 177). The interval 276–316 (IAGDTALDKNIHQSVSEQIKKNFAKSKWKQAFNATAVVRHM) is autoinhibitory domain. Residues 296–317 (KNFAKSKWKQAFNATAVVRHMR) form a calmodulin-binding region. The Nuclear export signal signature appears at 315-321 (HMRKLQL).

It belongs to the protein kinase superfamily. CAMK Ser/Thr protein kinase family. CaMK subfamily. Monomer. Interacts with XPO1. Phosphorylated by CaMKK1 and CaMKK2 on Thr-177. In terms of processing, polybiquitinated by the E3 ubiquitin-protein ligase complex SCF(FBXL12), leading to proteasomal degradation. As to expression, ubiquitous.

Its subcellular location is the cytoplasm. It localises to the nucleus. The catalysed reaction is L-seryl-[protein] + ATP = O-phospho-L-seryl-[protein] + ADP + H(+). It catalyses the reaction L-threonyl-[protein] + ATP = O-phospho-L-threonyl-[protein] + ADP + H(+). Its activity is regulated as follows. Activated by Ca(2+)/calmodulin. Binding of calmodulin results in conformational change that relieves intrasteric autoinhibition and allows phosphorylation of Thr-177 within the activation loop by CaMKK1 or CaMKK2. Phosphorylation of Thr-177 results in several fold increase in total activity. Unlike CaMK4, is unable to exhibit autonomous activity after Ca(2+)/calmodulin activation. Its function is as follows. Calcium/calmodulin-dependent protein kinase that operates in the calcium-triggered CaMKK-CaMK1 signaling cascade and, upon calcium influx, regulates transcription activators activity, cell cycle, hormone production, cell differentiation, actin filament organization and neurite outgrowth. Recognizes the substrate consensus sequence [MVLIF]-x-R-x(2)-[ST]-x(3)-[MVLIF]. Regulates axonal extension and growth cone motility in hippocampal and cerebellar nerve cells. Upon NMDA receptor-mediated Ca(2+) elevation, promotes dendritic growth in hippocampal neurons and is essential in synapses for full long-term potentiation (LTP) and ERK2-dependent translational activation. Downstream of NMDA receptors, promotes the formation of spines and synapses in hippocampal neurons by phosphorylating ARHGEF7/BETAPIX on 'Ser-673', which results in the enhancement of ARHGEF7 activity and activation of RAC1. Promotes neuronal differentiation and neurite outgrowth by activation and phosphorylation of MARK2 on 'Ser-91', 'Ser-92', 'Ser-93' and 'Ser-294'. Promotes nuclear export of HDAC5 and binding to 14-3-3 by phosphorylation of 'Ser-259' and 'Ser-498' in the regulation of muscle cell differentiation. Regulates NUMB-mediated endocytosis by phosphorylation of NUMB on 'Ser-276' and 'Ser-295'. Involved in the regulation of basal and estrogen-stimulated migration of medulloblastoma cells through ARHGEF7/BETAPIX phosphorylation. Is required for proper activation of cyclin-D1/CDK4 complex during G1 progression in diploid fibroblasts. Plays a role in K(+) and ANG2-mediated regulation of the aldosterone synthase (CYP11B2) to produce aldosterone in the adrenal cortex. Phosphorylates EIF4G3/eIF4GII. In vitro phosphorylates CREB1, ATF1, CFTR, MYL9 and SYN1/synapsin I. The chain is Calcium/calmodulin-dependent protein kinase type 1 (Camk1) from Mus musculus (Mouse).